The chain runs to 209 residues: Large ribosomal subunit protein uL3 (209 aa).

Positions 128–154 (QQRGPMTHGSKFHRAPGSMGASSDPSR) are disordered.

This sequence belongs to the universal ribosomal protein uL3 family. As to quaternary structure, part of the 50S ribosomal subunit. Forms a cluster with proteins L14 and L19.

Functionally, one of the primary rRNA binding proteins, it binds directly near the 3'-end of the 23S rRNA, where it nucleates assembly of the 50S subunit. This Clostridium beijerinckii (strain ATCC 51743 / NCIMB 8052) (Clostridium acetobutylicum) protein is Large ribosomal subunit protein uL3.